The chain runs to 124 residues: Fluoride-specific ion channel FluC (124 aa).

The next 4 helical transmembrane spans lie at Leu-4–Phe-24, Phe-35–Gly-55, Ile-60–Ser-80, and Val-102–Ser-122. Na(+)-binding residues include Gly-74 and Thr-77.

This sequence belongs to the fluoride channel Fluc/FEX (TC 1.A.43) family.

The protein localises to the cell inner membrane. The catalysed reaction is fluoride(in) = fluoride(out). Na(+) is not transported, but it plays an essential structural role and its presence is essential for fluoride channel function. Functionally, fluoride-specific ion channel. Important for reducing fluoride concentration in the cell, thus reducing its toxicity. This Shewanella baltica (strain OS185) protein is Fluoride-specific ion channel FluC.